The sequence spans 591 residues: Protein NRT1/ PTR FAMILY 4.3 (591 aa).

Residues 1-10 (MAEINKQSNK) are compositionally biased toward polar residues. A disordered region spans residues 1 to 38 (MAEINKQSNKWEQEEVSNENNWELAEEESVDWRGRPSN). Helical transmembrane passes span 47-67 (AALF…AVGN), 85-105 (ANIV…GGYL), 109-129 (FLGS…GFIL), 157-177 (GFKA…SGCV), 204-224 (FNAA…LLVW), 233-253 (IGFG…VSGT), 347-367 (LISL…LAQL), 395-415 (AIPY…LVPF), 429-449 (LTRI…AAML), 463-483 (ILSI…EMFT), 502-522 (FLMA…SVLV), and 551-571 (LFYW…LFWS).

The protein belongs to the major facilitator superfamily. Proton-dependent oligopeptide transporter (POT/PTR) (TC 2.A.17) family. As to expression, expressed in flowers. Detected in roots and siliques.

Its subcellular location is the membrane. This chain is Protein NRT1/ PTR FAMILY 4.3 (NPF4.3), found in Arabidopsis thaliana (Mouse-ear cress).